The following is a 304-amino-acid chain: Pyridoxal 5'-phosphate synthase subunit PdxS (304 aa).

D34 lines the D-ribose 5-phosphate pocket. Residue K91 is the Schiff-base intermediate with D-ribose 5-phosphate of the active site. Residue G163 coordinates D-ribose 5-phosphate. R175 contributes to the D-glyceraldehyde 3-phosphate binding site. D-ribose 5-phosphate is bound by residues G224 and G245 to S246.

The protein belongs to the PdxS/SNZ family. In the presence of PdxT, forms a dodecamer of heterodimers.

The enzyme catalyses aldehydo-D-ribose 5-phosphate + D-glyceraldehyde 3-phosphate + L-glutamine = pyridoxal 5'-phosphate + L-glutamate + phosphate + 3 H2O + H(+). The protein operates within cofactor biosynthesis; pyridoxal 5'-phosphate biosynthesis. Functionally, catalyzes the formation of pyridoxal 5'-phosphate from ribose 5-phosphate (RBP), glyceraldehyde 3-phosphate (G3P) and ammonia. The ammonia is provided by the PdxT subunit. Can also use ribulose 5-phosphate and dihydroxyacetone phosphate as substrates, resulting from enzyme-catalyzed isomerization of RBP and G3P, respectively. In Cutibacterium acnes (strain DSM 16379 / KPA171202) (Propionibacterium acnes), this protein is Pyridoxal 5'-phosphate synthase subunit PdxS.